The sequence spans 102 residues: Small ribosomal subunit protein uS10 (102 aa).

This sequence belongs to the universal ribosomal protein uS10 family. Part of the 30S ribosomal subunit.

Involved in the binding of tRNA to the ribosomes. This is Small ribosomal subunit protein uS10 from Gluconobacter oxydans (strain 621H) (Gluconobacter suboxydans).